The sequence spans 805 residues: Sucrose synthase (805 aa).

The GT-B glycosyltransferase stretch occupies residues methionine 275–threonine 752.

The protein belongs to the glycosyltransferase 1 family. Plant sucrose synthase subfamily.

It carries out the reaction an NDP-alpha-D-glucose + D-fructose = a ribonucleoside 5'-diphosphate + sucrose + H(+). Its function is as follows. Sucrose-cleaving enzyme that provides UDP-glucose and fructose for various metabolic pathways. The sequence is that of Sucrose synthase from Medicago sativa (Alfalfa).